The following is a 65-amino-acid chain: Weak toxin CM-13b (65 aa).

Intrachain disulfides connect cysteine 3/cysteine 24, cysteine 6/cysteine 11, cysteine 17/cysteine 42, cysteine 46/cysteine 57, and cysteine 58/cysteine 63.

Belongs to the three-finger toxin family. Ancestral subfamily. Orphan group II sub-subfamily. Expressed by the venom gland.

The protein resides in the secreted. In terms of biological role, binds with low affinity to muscular (alpha-1-beta-1-delta-epsilon/CHRNA1-CHRNB1-CHRND-CHRNE) and very low affinity to neuronal (alpha-7/CHRNA7) nicotinic acetylcholine receptor (nAChR). This is Weak toxin CM-13b from Naja annulifera (Banded Egyptian cobra).